The sequence spans 346 residues: Golgi-associated RAB2 interactor protein 2 (346 aa).

The interval 275-346 (TPVESEANTS…EKHVRQPKDF (72 aa)) is disordered. 2 stretches are compositionally biased toward basic and acidic residues: residues 283-297 (TSKE…EKTP) and 334-346 (KLVE…PKDF).

This sequence belongs to the GARIN family. As to quaternary structure, interacts with CALM1.

It localises to the cell projection. Its subcellular location is the cilium. The protein resides in the flagellum. Functionally, seems to play a role in sperm motility. The polypeptide is Golgi-associated RAB2 interactor protein 2 (GARIN2) (Macaca fascicularis (Crab-eating macaque)).